A 208-amino-acid polypeptide reads, in one-letter code: Probable GTP-binding protein EngB (208 aa).

The region spanning 23-205 (LTSEMVILGR…RQTLLKYLLT (183 aa)) is the EngB-type G domain. Residues 31–38 (GRSNVGKS), 57–61 (GKTRL), 84–87 (DLPG), 154–157 (TKFD), and 182–184 (FNA) each bind GTP. Mg(2+) contacts are provided by serine 38 and threonine 59.

Belongs to the TRAFAC class TrmE-Era-EngA-EngB-Septin-like GTPase superfamily. EngB GTPase family. It depends on Mg(2+) as a cofactor.

In terms of biological role, necessary for normal cell division and for the maintenance of normal septation. In Helicobacter pylori (strain P12), this protein is Probable GTP-binding protein EngB.